A 755-amino-acid chain; its full sequence is MVSTPPTLLMLFDDGDAGPSTGLVHREKSDAVNEEAHATSVPPHAPPQTLWLLDNFNIEDSYDRDAGPSTGPVHRERSDAVNEEAHATSIPPHAPPQTLWLLDNFNIEDSYDRDAGPSTSPIDREASHEVNEDAHATSAPPHVMVSPLQNRRPFDQFNNQPYDASAGPSTGPGKRGRGRPKGSKNGSRKPKKPKAYDNNSTDASAGPSSGLGKRRCGRPKGLKNRSRKPKKPKADDPNSKMVISCPDFDSRITEAERESGNQEIVDSILMRFDAVRRRLCQLNYRKDKILTASTNCMNLGVRTNMTRRIGPIPGVQVGDIFYYWCEMCLVGLHRNTAGGIDSLLAKESGVDGPAATSVVTSGKYDNETEDLETLIYSGHGGKPCDQVLQRGNRALEASVRRRNEVRVIRGELYNNEKVYIYDGLYLVSDCWQVTGKSGFKEYRFKLLRKPGQPPGYAIWKLVENLRNHELIDPRQGFILGDLSFGEEGLRVPLVNEVDEEDKTIPDDFDYIRSQCYSGMTNDVNVDSQSLVQSYIHQNCTCILKNCGQLPYHDNILVCRKPLIYECGGSCPTRMVETGLKLHLEVFKTSNCGWGLRSWDPIRAGTFICEFTGVSKTKEEVEEDDDYLFDTSRIYHSFRWNYEPELLCEDACEQVSEDANLPTQVLISAKEKGNVGRFMNHNCWPNVFWQPIEYDDNNGHIYVRIGLFAMKHIPPMTELTYDYGISCVEKTGEDEVIYKGKKICLCGSVKCRGSFG.

Disordered regions lie at residues tyrosine 62–threonine 98 and tyrosine 111–isoleucine 243. 2 stretches are compositionally biased toward basic and acidic residues: residues valine 73–histidine 86 and isoleucine 122–histidine 135. The segment at residues lysine 174–glycine 186 is a DNA-binding region (a.T hook). The segment covering lysine 174 to proline 193 has biased composition (basic residues). Residues aspartate 197–proline 207 are compositionally biased toward polar residues. Over residues glycine 212–lysine 231 the composition is skewed to basic residues. One can recognise a YDG domain in the interval glycine 310–arginine 448. The Pre-SET domain occupies glutamine 528–glycine 578. The SET domain maps to leucine 581–glycine 723. Residues cysteine 591–tryptophan 593, aspartate 624, tyrosine 626, arginine 676, and asparagine 679–histidine 680 contribute to the S-adenosyl-L-methionine site. Zn(2+) contacts are provided by cysteine 682, cysteine 743, cysteine 745, and cysteine 750. In terms of domain architecture, Post-SET spans glycine 739–glycine 755.

Belongs to the class V-like SAM-binding methyltransferase superfamily. Histone-lysine methyltransferase family. Suvar3-9 subfamily.

The protein resides in the nucleus. Its subcellular location is the chromosome. It localises to the centromere. The catalysed reaction is N(6)-methyl-L-lysyl(9)-[histone H3] + S-adenosyl-L-methionine = N(6),N(6)-dimethyl-L-lysyl(9)-[histone H3] + S-adenosyl-L-homocysteine + H(+). It catalyses the reaction L-lysyl(9)-[histone H3] + S-adenosyl-L-methionine = N(6)-methyl-L-lysyl(9)-[histone H3] + S-adenosyl-L-homocysteine + H(+). Histone methyltransferase. Methylates 'Lys-9' of histone H3. H3 'Lys-9' methylation represents a specific tag for epigenetic transcriptional repression. The protein is Histone-lysine N-methyltransferase, H3 lysine-9 specific SUVH8 (SUVH8) of Arabidopsis thaliana (Mouse-ear cress).